We begin with the raw amino-acid sequence, 353 residues long: MEVDTATFVRLHHELLCAHEGPSIISKFDAIKKVKLGTLANQSGGVNNITEAFLAKLRNFERKSEAYLASDLAERELTRDTHKAIVFVTKSVLLGGKSLKDLLPYGVIVCAFIFIPETASVLDNVPVMIGNQKRPLTVALIKYIAKSLNCDLVGDSYDTFYYCNSSAYGKNLISVSDNDFSNPQRALLSVGDLCYQAARSLHVAAANYIRIFDRMPPGFQPSKHLFRIIGVLDMETLKTMVTSNIAREPGMFCHDNVKDVLHRIGVYSPNHHFSAVILWKGWASTYAYMFNQEQLNMLSGTSGLAGDFGKYKLTYGSTFDEGVIHVQYQFVTPEVVRKRNIYPDLSALKGGGS.

Belongs to the phytoreovirus non-structural protein 10 family.

In terms of biological role, suppressor of RNA-mediated gene silencing, also known as post-transcriptional gene silencing (PTGS), a mechanism of plant viral defense that limits the accumulation of viral RNAs. The polypeptide is Suppressor of RNA-mediated gene silencing (Alopecurus aequalis (Barnyard grass)).